Here is a 221-residue protein sequence, read N- to C-terminus: Octanoyltransferase (221 aa).

The region spanning 29–208 (DEIPDTCLLL…RLTEFLLPAR (180 aa)) is the BPL/LPL catalytic domain. Substrate contacts are provided by residues 67-74 (RGGRITWH), 138-140 (AIG), and 151-153 (GFA). Catalysis depends on Cys-169, which acts as the Acyl-thioester intermediate.

This sequence belongs to the LipB family.

It localises to the cytoplasm. It catalyses the reaction octanoyl-[ACP] + L-lysyl-[protein] = N(6)-octanoyl-L-lysyl-[protein] + holo-[ACP] + H(+). It functions in the pathway protein modification; protein lipoylation via endogenous pathway; protein N(6)-(lipoyl)lysine from octanoyl-[acyl-carrier-protein]: step 1/2. Catalyzes the transfer of endogenously produced octanoic acid from octanoyl-acyl-carrier-protein onto the lipoyl domains of lipoate-dependent enzymes. Lipoyl-ACP can also act as a substrate although octanoyl-ACP is likely to be the physiological substrate. This Acidothermus cellulolyticus (strain ATCC 43068 / DSM 8971 / 11B) protein is Octanoyltransferase.